We begin with the raw amino-acid sequence, 255 residues long: Probable transcriptional regulatory protein PCC7424_2775 (255 aa).

This sequence belongs to the TACO1 family.

It localises to the cytoplasm. In Gloeothece citriformis (strain PCC 7424) (Cyanothece sp. (strain PCC 7424)), this protein is Probable transcriptional regulatory protein PCC7424_2775.